The primary structure comprises 308 residues: MAFSLQLQQIFVSYTRFCSQPKSITNPLISLKLPSIHPLAFAQNAAVSNIDTGVAAIDGSAEEVSLPPQLRRELMPKHVALIMDGNRRWAKMRGLPVALGYEAGIRAVRKIIELCGNWGIMVLTLFAFSSDNWLRPKVEVDILMSLFERALNDELENFAREGIRISIIGDSSKLPKSLQDLIAKAVKTTKENSRLHLVVAVNYSGQHDVVQACQTIAQKVKDDIIETKDINSFLIEQELQTNCIDFPCPDLLIRTSGELRLSNFLLWQLAYSELFFSHSHWPDFGEAEFLEALCSFQQRQRRYGRQSS.

The transit peptide at 1-45 directs the protein to the chloroplast; sequence MAFSLQLQQIFVSYTRFCSQPKSITNPLISLKLPSIHPLAFAQNA. Residue Asp-84 is part of the active site.

The protein belongs to the UPP synthase family. The cofactor is Mg(2+). Widely expressed.

Its subcellular location is the plastid. The protein localises to the chloroplast. Uses neryl diphosphate and geranyl diphosphate to catalyze the cis-prenyl chain elongation and produce polyprenyl diphosphate with a chain of 55 carbons. This Solanum lycopersicum (Tomato) protein is Cis-prenyltransferase 4, chloroplastic.